Reading from the N-terminus, the 445-residue chain is Tubulin beta-4 chain (445 aa).

The GTP site is built by Gln11, Glu69, Ser138, Gly142, Thr143, Gly144, Asn204, and Asn226. Mg(2+) is bound at residue Glu69. The tract at residues 421–445 is disordered; it reads EYQQYQDATADEEYDEEEEEERDAE. The segment covering 429–445 has biased composition (acidic residues); that stretch reads TADEEYDEEEEEERDAE.

The protein belongs to the tubulin family. Dimer of alpha and beta chains. A typical microtubule is a hollow water-filled tube with an outer diameter of 25 nm and an inner diameter of 15 nM. Alpha-beta heterodimers associate head-to-tail to form protofilaments running lengthwise along the microtubule wall with the beta-tubulin subunit facing the microtubule plus end conferring a structural polarity. Microtubules usually have 13 protofilaments but different protofilament numbers can be found in some organisms and specialized cells. Mg(2+) is required as a cofactor.

The protein resides in the cytoplasm. It is found in the cytoskeleton. Its function is as follows. Tubulin is the major constituent of microtubules, a cylinder consisting of laterally associated linear protofilaments composed of alpha- and beta-tubulin heterodimers. Microtubules grow by the addition of GTP-tubulin dimers to the microtubule end, where a stabilizing cap forms. Below the cap, tubulin dimers are in GDP-bound state, owing to GTPase activity of alpha-tubulin. This is Tubulin beta-4 chain (TUBB4) from Triticum aestivum (Wheat).